We begin with the raw amino-acid sequence, 500 residues long: Lysine--tRNA ligase (500 aa).

Residues D412 and E419 each contribute to the Mg(2+) site.

It belongs to the class-II aminoacyl-tRNA synthetase family. In terms of assembly, homodimer. Mg(2+) serves as cofactor.

It localises to the cytoplasm. The catalysed reaction is tRNA(Lys) + L-lysine + ATP = L-lysyl-tRNA(Lys) + AMP + diphosphate. The protein is Lysine--tRNA ligase of Kineococcus radiotolerans (strain ATCC BAA-149 / DSM 14245 / SRS30216).